Consider the following 304-residue polypeptide: Olfactory receptor 4K13 (304 aa).

Topologically, residues 1 to 25 are extracellular; that stretch reads MERANHSVVSEFILLGLSKSQNLQI. The N-linked (GlcNAc...) asparagine glycan is linked to asparagine 5. Residues 26–49 traverse the membrane as a helical segment; the sequence is LFFLGFSVVFVGIVLGNLLILVTV. At 50–57 the chain is on the cytoplasmic side; the sequence is TFDSLLHT. The chain crosses the membrane as a helical span at residues 58-79; sequence PMYFLLSNLSCIDMILASFATP. Residues 80–100 are Extracellular-facing; it reads KMIVDFLRERKTISWWGCYSQ. Residues cysteine 97 and cysteine 189 are joined by a disulfide bond. A helical transmembrane segment spans residues 101-120; the sequence is MFFMHLLGGSEMMLLVAMAI. Residues 121-139 lie on the Cytoplasmic side of the membrane; sequence DRYVAICKPLHYMTIMSPR. A helical membrane pass occupies residues 140-158; the sequence is VLTGLLLSSYAVGFVHSSS. At 159–195 the chain is on the extracellular side; the sequence is QMAFMLTLPFCGPNVIDSFFCDLPLVIKLACKDTYIL. Residues 196 to 219 traverse the membrane as a helical segment; sequence QLLVIADSGLLSLVCFLLLLVSYG. The Cytoplasmic segment spans residues 220–235; sequence VIIFSVRYRAASRSSK. A helical transmembrane segment spans residues 236–258; the sequence is AFSTLSAHITVVTLFFAPCVFIY. The Extracellular segment spans residues 259–269; sequence VWPFSRYSVDK. Residues 270-289 form a helical membrane-spanning segment; that stretch reads ILSVFYTIFTPLLNPIIYTL. Topologically, residues 290–304 are cytoplasmic; the sequence is RNQEVKAAIKKRLCI.

This sequence belongs to the G-protein coupled receptor 1 family.

Its subcellular location is the cell membrane. Odorant receptor. This Homo sapiens (Human) protein is Olfactory receptor 4K13 (OR4K13).